Reading from the N-terminus, the 352-residue chain is ADP-ribosylation factor GTPase-activating protein GCS1 (352 aa).

In terms of domain architecture, Arf-GAP spans R11–F127. A C4-type zinc finger spans residues C26 to C49. The segment covering S138 to T151 has biased composition (low complexity). 2 disordered regions span residues S138–Q181 and N196–N231. Residue T151 is modified to Phosphothreonine. S157 is subject to Phosphoserine. Position 161 is a phosphothreonine (T161). The residue at position 168 (S168) is a Phosphoserine. Residues S168 to N179 are compositionally biased toward polar residues. T170 is subject to Phosphothreonine. A Phosphoserine modification is found at S260. Over residues N315–T330 the composition is skewed to polar residues. A disordered region spans residues N315–F352. The span at E331–E343 shows a compositional bias: basic and acidic residues.

It localises to the cytoplasm. Its subcellular location is the mitochondrion. The protein localises to the perinuclear region. The protein resides in the golgi apparatus. GTPase-activating protein (GAP) for ARF1 and ARF2. Involved in intracellular vesicular transport. Required for transport from the trans-Golgi network. Implicated in the regulation of retrograde transport from the Golgi to the ER and in actin cytoskeletal organization. May be involved in the maintenance of mitochondrial morphology, possibly through organizing the actin cytoskeleton in Saccharomyces. This chain is ADP-ribosylation factor GTPase-activating protein GCS1 (GCS1), found in Saccharomyces cerevisiae (strain ATCC 204508 / S288c) (Baker's yeast).